The primary structure comprises 385 residues: S-adenosylmethionine synthase (385 aa).

Position 15 (His15) interacts with ATP. Asp17 is a binding site for Mg(2+). Glu43 lines the K(+) pocket. Residues Glu56 and Gln99 each contribute to the L-methionine site. Residues Gln99 to Arg109 form a flexible loop region. Residues Asp164 to Lys166, Arg230 to Phe231, Asp239, Arg245 to Lys246, Ala262, and Lys266 each bind ATP. Asp239 serves as a coordination point for L-methionine. Lys270 provides a ligand contact to L-methionine.

Belongs to the AdoMet synthase family. As to quaternary structure, homotetramer; dimer of dimers. It depends on Mg(2+) as a cofactor. Requires K(+) as cofactor.

It is found in the cytoplasm. The catalysed reaction is L-methionine + ATP + H2O = S-adenosyl-L-methionine + phosphate + diphosphate. It participates in amino-acid biosynthesis; S-adenosyl-L-methionine biosynthesis; S-adenosyl-L-methionine from L-methionine: step 1/1. Functionally, catalyzes the formation of S-adenosylmethionine (AdoMet) from methionine and ATP. The overall synthetic reaction is composed of two sequential steps, AdoMet formation and the subsequent tripolyphosphate hydrolysis which occurs prior to release of AdoMet from the enzyme. The chain is S-adenosylmethionine synthase from Sodalis glossinidius (strain morsitans).